Consider the following 305-residue polypeptide: Spermatogenesis-associated protein 4 (305 aa).

In terms of domain architecture, Calponin-homology (CH) spans Ser49 to Arg155.

Highly expressed in testis, the expression is observed precisely in seminiferous tubules.

The protein localises to the nucleus. In terms of biological role, may play a role in apoptosis regulation. This chain is Spermatogenesis-associated protein 4 (SPATA4), found in Homo sapiens (Human).